Consider the following 1450-residue polypeptide: DNA-directed RNA polymerase RPB1 homolog (1450 aa).

This sequence belongs to the RNA polymerase beta' chain family. Part of the viral DNA-directed RNA polymerase that consists of 8 polII-like subunits (RPB1, RPB2, RPB3, RPB5, RPB6, RPB7, RPB9, RPB10), a capping enzyme and a termination factor.

It is found in the virion. It catalyses the reaction RNA(n) + a ribonucleoside 5'-triphosphate = RNA(n+1) + diphosphate. Functionally, catalytic component of the DNA-directed RNA polymerase (RNAP) that catalyzes the transcription in the cytoplasm of viral DNA into RNA using the four ribonucleoside triphosphates as substrates. Forms the polymerase active center together with RPB2. Part of the core element with the central large cleft, the clamp element that moves to open and close the cleft and the jaws that are thought to grab the incoming DNA template. This chain is DNA-directed RNA polymerase RPB1 homolog, found in African swine fever virus (isolate Tick/South Africa/Pretoriuskop Pr4/1996) (ASFV).